A 134-amino-acid polypeptide reads, in one-letter code: Small ribosomal subunit protein uS8c (134 aa).

It belongs to the universal ribosomal protein uS8 family. Part of the 30S ribosomal subunit.

It localises to the plastid. The protein localises to the chloroplast. Functionally, one of the primary rRNA binding proteins, it binds directly to 16S rRNA central domain where it helps coordinate assembly of the platform of the 30S subunit. The protein is Small ribosomal subunit protein uS8c (rps8) of Nicotiana tomentosiformis (Tobacco).